A 485-amino-acid polypeptide reads, in one-letter code: Probable high-affinity nitrate transporter 2.4 (485 aa).

A run of 12 helical transmembrane segments spans residues 56–76, 80–100, 119–139, 147–167, 177–197, 215–235, 270–290, 305–327, 341–361, 377–397, 405–425, and 435–455; these read WMSL…LPAM, LVLA…ATLV, GVAS…ASSP, FVAG…SRIF, AVAA…MPVA, VTYL…LAFP, AWLL…MENV, AAGA…GGVA, LWAL…VGRM, VACA…VPFV, VSGM…RLFF, and AISC…LIHF.

The protein belongs to the major facilitator superfamily. Nitrate/nitrite porter (TC 2.A.1.8) family. In terms of tissue distribution, expressed in the base of the lateral root primordia, root-shoot junction zone, leaves, ends of the husk and vascular tissue of the anthers.

The protein localises to the cell membrane. In terms of biological role, involved in nitrate transport. This Oryza sativa subsp. japonica (Rice) protein is Probable high-affinity nitrate transporter 2.4 (NRT2.4).